We begin with the raw amino-acid sequence, 793 residues long: Putative dipeptidyl aminopeptidase C2E11.08 (793 aa).

Topologically, residues 1-24 are cytoplasmic; that stretch reads MNDFSFEDKGLISRSGFGSRHVRR. The helical; Signal-anchor for type II membrane protein transmembrane segment at 25 to 45 threads the bilayer; it reads VVKALALIFSLLILYLTISNV. The Lumenal segment spans residues 46–793; sequence SDSPPKRDSL…STGVRQHRWD (748 aa). Residues Asn101, Asn136, Asn246, Asn299, Asn303, Asn324, Asn336, Asn377, Asn384, Asn407, and Asn535 are each glycosylated (N-linked (GlcNAc...) asparagine). Catalysis depends on charge relay system residues Ser647, Asp722, and His755. Asn761 is a glycosylation site (N-linked (GlcNAc...) asparagine).

The protein belongs to the peptidase S9B family.

The protein localises to the vacuole membrane. The chain is Putative dipeptidyl aminopeptidase C2E11.08 from Schizosaccharomyces pombe (strain 972 / ATCC 24843) (Fission yeast).